A 295-amino-acid chain; its full sequence is Phosphatidylserine decarboxylase proenzyme (295 aa).

Active-site charge relay system; for autoendoproteolytic cleavage activity residues include aspartate 101, histidine 158, and serine 262. Serine 262 serves as the catalytic Schiff-base intermediate with substrate; via pyruvic acid; for decarboxylase activity. Serine 262 carries the post-translational modification Pyruvic acid (Ser); by autocatalysis.

Belongs to the phosphatidylserine decarboxylase family. PSD-B subfamily. Prokaryotic type I sub-subfamily. As to quaternary structure, heterodimer of a large membrane-associated beta subunit and a small pyruvoyl-containing alpha subunit. Pyruvate serves as cofactor. Post-translationally, is synthesized initially as an inactive proenzyme. Formation of the active enzyme involves a self-maturation process in which the active site pyruvoyl group is generated from an internal serine residue via an autocatalytic post-translational modification. Two non-identical subunits are generated from the proenzyme in this reaction, and the pyruvate is formed at the N-terminus of the alpha chain, which is derived from the carboxyl end of the proenzyme. The autoendoproteolytic cleavage occurs by a canonical serine protease mechanism, in which the side chain hydroxyl group of the serine supplies its oxygen atom to form the C-terminus of the beta chain, while the remainder of the serine residue undergoes an oxidative deamination to produce ammonia and the pyruvoyl prosthetic group on the alpha chain. During this reaction, the Ser that is part of the protease active site of the proenzyme becomes the pyruvoyl prosthetic group, which constitutes an essential element of the active site of the mature decarboxylase.

It localises to the cell membrane. It carries out the reaction a 1,2-diacyl-sn-glycero-3-phospho-L-serine + H(+) = a 1,2-diacyl-sn-glycero-3-phosphoethanolamine + CO2. The protein operates within phospholipid metabolism; phosphatidylethanolamine biosynthesis; phosphatidylethanolamine from CDP-diacylglycerol: step 2/2. In terms of biological role, catalyzes the formation of phosphatidylethanolamine (PtdEtn) from phosphatidylserine (PtdSer). The sequence is that of Phosphatidylserine decarboxylase proenzyme from Pasteurella multocida (strain Pm70).